A 269-amino-acid polypeptide reads, in one-letter code: Phosphonoacetaldehyde hydrolase (269 aa).

D10 functions as the Nucleophile in the catalytic mechanism. The Mg(2+) site is built by D10 and A12. Catalysis depends on K52, which acts as the Schiff-base intermediate with substrate. A Mg(2+)-binding site is contributed by D186.

It belongs to the HAD-like hydrolase superfamily. PhnX family. Homodimer. Requires Mg(2+) as cofactor.

It catalyses the reaction phosphonoacetaldehyde + H2O = acetaldehyde + phosphate + H(+). In terms of biological role, involved in phosphonate degradation. In Salmonella paratyphi A (strain ATCC 9150 / SARB42), this protein is Phosphonoacetaldehyde hydrolase.